Consider the following 1404-residue polypeptide: DNA-directed RNA polymerase subunit beta' (1404 aa).

The Zn(2+) site is built by cysteine 72, cysteine 74, cysteine 87, and cysteine 90. 3 residues coordinate Mg(2+): aspartate 463, aspartate 465, and aspartate 467. Positions 811, 885, 892, and 895 each coordinate Zn(2+).

Belongs to the RNA polymerase beta' chain family. As to quaternary structure, the RNAP catalytic core consists of 2 alpha, 1 beta, 1 beta' and 1 omega subunit. When a sigma factor is associated with the core the holoenzyme is formed, which can initiate transcription. Mg(2+) is required as a cofactor. The cofactor is Zn(2+).

The enzyme catalyses RNA(n) + a ribonucleoside 5'-triphosphate = RNA(n+1) + diphosphate. In terms of biological role, DNA-dependent RNA polymerase catalyzes the transcription of DNA into RNA using the four ribonucleoside triphosphates as substrates. This chain is DNA-directed RNA polymerase subunit beta', found in Jannaschia sp. (strain CCS1).